The chain runs to 629 residues: tRNA uridine 5-carboxymethylaminomethyl modification enzyme MnmG (629 aa).

FAD contacts are provided by residues 13-18, V125, and S180; that span reads GGGHAG. 273–287 lines the NAD(+) pocket; the sequence is GPRYCPSIEDKVMRF. Q370 contacts FAD.

The protein belongs to the MnmG family. Homodimer. Heterotetramer of two MnmE and two MnmG subunits. Requires FAD as cofactor.

It is found in the cytoplasm. NAD-binding protein involved in the addition of a carboxymethylaminomethyl (cmnm) group at the wobble position (U34) of certain tRNAs, forming tRNA-cmnm(5)s(2)U34. The sequence is that of tRNA uridine 5-carboxymethylaminomethyl modification enzyme MnmG from Aliivibrio fischeri (strain ATCC 700601 / ES114) (Vibrio fischeri).